We begin with the raw amino-acid sequence, 335 residues long: Holliday junction branch migration complex subunit RuvB (335 aa).

Residues 2-184 (ADERIVSAEN…FGIVEHMAYY (183 aa)) are large ATPase domain (RuvB-L). Residues leucine 23, arginine 24, glycine 65, lysine 68, threonine 69, threonine 70, 131-133 (EDF), arginine 174, tyrosine 184, and arginine 221 each bind ATP. Residue threonine 69 coordinates Mg(2+). Positions 185–255 (TEADLMDIVQ…IADHALSQLQ (71 aa)) are small ATPAse domain (RuvB-S). Positions 258 to 335 (IRGLDGVDRK…AHLGMPYPEK (78 aa)) are head domain (RuvB-H). DNA is bound by residues arginine 313 and arginine 318.

It belongs to the RuvB family. In terms of assembly, homohexamer. Forms an RuvA(8)-RuvB(12)-Holliday junction (HJ) complex. HJ DNA is sandwiched between 2 RuvA tetramers; dsDNA enters through RuvA and exits via RuvB. An RuvB hexamer assembles on each DNA strand where it exits the tetramer. Each RuvB hexamer is contacted by two RuvA subunits (via domain III) on 2 adjacent RuvB subunits; this complex drives branch migration. In the full resolvosome a probable DNA-RuvA(4)-RuvB(12)-RuvC(2) complex forms which resolves the HJ.

Its subcellular location is the cytoplasm. The catalysed reaction is ATP + H2O = ADP + phosphate + H(+). In terms of biological role, the RuvA-RuvB-RuvC complex processes Holliday junction (HJ) DNA during genetic recombination and DNA repair, while the RuvA-RuvB complex plays an important role in the rescue of blocked DNA replication forks via replication fork reversal (RFR). RuvA specifically binds to HJ cruciform DNA, conferring on it an open structure. The RuvB hexamer acts as an ATP-dependent pump, pulling dsDNA into and through the RuvAB complex. RuvB forms 2 homohexamers on either side of HJ DNA bound by 1 or 2 RuvA tetramers; 4 subunits per hexamer contact DNA at a time. Coordinated motions by a converter formed by DNA-disengaged RuvB subunits stimulates ATP hydrolysis and nucleotide exchange. Immobilization of the converter enables RuvB to convert the ATP-contained energy into a lever motion, pulling 2 nucleotides of DNA out of the RuvA tetramer per ATP hydrolyzed, thus driving DNA branch migration. The RuvB motors rotate together with the DNA substrate, which together with the progressing nucleotide cycle form the mechanistic basis for DNA recombination by continuous HJ branch migration. Branch migration allows RuvC to scan DNA until it finds its consensus sequence, where it cleaves and resolves cruciform DNA. The polypeptide is Holliday junction branch migration complex subunit RuvB (Latilactobacillus sakei subsp. sakei (strain 23K) (Lactobacillus sakei subsp. sakei)).